The following is an 875-amino-acid chain: MDDKEIKKLMKPEFAKNYEKYYPVQTLTAMGYHRRVCKKCGRGFWTQVERDFCDEAECSGGYRFIGESLTRKKFEYKEAWDTYVKTFEQWGYVPLERYPTVCRWYEDLYFVAAGINDFQPYVVSGEIEPPARAVLEPQFCLRFNDIDNVGITGRHYTGFIMVGQHTFNTPEKHVYFKEEGIGQIQHFLTQGLGIPAHEIVFHEDVWAGGGNFGPSIEYFSRGLELGNQVYMQYEQTPDGGFKELRTKVIDMGAGLERWAWFSQGCPMSYDATFPKTMEFIYNKTGYRADPVFHAKFAKYAGILNVEEIEDVGSAWNDVAKSMEMDLGELKDMVYKIRAQYVLADHTRSLLVAIHDGALPSNVGGGYNLRNLLRRCWSLIDQYQWDIDLNDIFRSHIDEFGSWYTELKDYGSLFDIIDVERKRYEESRRKSKDIIKRMVKAKETLTADKLVELYDSQGISPELIKEAKPDVVIPEDFYARVQARHDAKATRKIEVNETQGLPKTEPMYYEKPREFKFEANVVKLLTPTKLVLDRTLFYPLGGGQAGDTGFVNGIKVKDVYKQDGVIIHVLESPMPPDTTKVIGEVDEARRRILAAHHSATHIVNYAARKVLGDHVWQAGAEKTPEKARLDITHYESLTFQQLQEIERVANDLAMKQIPVVVREMSRTEAEMEYSMRIYQGGAVPGKILRIIVIDGYDVEACGGIHVDNTSKVGFIKMLSSERIQDGVVRLEFKSLDNAVSEIQHHESILREVSDLWGVGYDDIPKTAQRFFNEWKELGKKNKELQAELVQQTIAAALGKPGDTVDVVVTGADFGTLMKAVGSFKKEFKGRTVIFRGDNFAYGYSDLINVKEKLAEGYVNVDGSEHEAKAFKAKPKA.

Positions 596, 600, 700, and 704 each coordinate Zn(2+).

It belongs to the class-II aminoacyl-tRNA synthetase family. It depends on Zn(2+) as a cofactor.

The protein localises to the cytoplasm. The enzyme catalyses tRNA(Ala) + L-alanine + ATP = L-alanyl-tRNA(Ala) + AMP + diphosphate. Catalyzes the attachment of alanine to tRNA(Ala) in a two-step reaction: alanine is first activated by ATP to form Ala-AMP and then transferred to the acceptor end of tRNA(Ala). Also edits incorrectly charged Ser-tRNA(Ala) and Gly-tRNA(Ala) via its editing domain. The protein is Alanine--tRNA ligase of Methanocella arvoryzae (strain DSM 22066 / NBRC 105507 / MRE50).